A 248-amino-acid polypeptide reads, in one-letter code: Adenosylcobinamide-GDP ribazoletransferase (248 aa).

A run of 7 helical transmembrane segments spans residues 24–44 (EINLKKGSALLPFVGVIIGAW), 70–90 (IIITGGFHVDALADTADGLFS), 106–126 (VGANGVIAICFYFLFYGSLFL), 134–154 (IGWLFFVLPIVAKGVTMLLFA), 157–177 (TYAGSKAGLGSIFLGVPWWPV), 188–210 (LGLFFSYIGVIAYAGVILFTIIY), and 228–248 (AGGQMGQLICLFCLVLLWGLI).

It belongs to the CobS family. The cofactor is Mg(2+).

It localises to the cell membrane. The catalysed reaction is alpha-ribazole + adenosylcob(III)inamide-GDP = adenosylcob(III)alamin + GMP + H(+). It carries out the reaction alpha-ribazole 5'-phosphate + adenosylcob(III)inamide-GDP = adenosylcob(III)alamin 5'-phosphate + GMP + H(+). The protein operates within cofactor biosynthesis; adenosylcobalamin biosynthesis; adenosylcobalamin from cob(II)yrinate a,c-diamide: step 7/7. Functionally, joins adenosylcobinamide-GDP and alpha-ribazole to generate adenosylcobalamin (Ado-cobalamin). Also synthesizes adenosylcobalamin 5'-phosphate from adenosylcobinamide-GDP and alpha-ribazole 5'-phosphate. This chain is Adenosylcobinamide-GDP ribazoletransferase, found in Listeria monocytogenes serotype 4b (strain CLIP80459).